Reading from the N-terminus, the 364-residue chain is tRNA 2-selenouridine synthase (364 aa).

The 124-residue stretch at leucine 14 to tryptophan 137 folds into the Rhodanese domain. Cysteine 97 serves as the catalytic S-selanylcysteine intermediate.

It belongs to the SelU family. As to quaternary structure, monomer.

The enzyme catalyses 5-methylaminomethyl-2-thiouridine(34) in tRNA + selenophosphate + (2E)-geranyl diphosphate + H2O + H(+) = 5-methylaminomethyl-2-selenouridine(34) in tRNA + (2E)-thiogeraniol + phosphate + diphosphate. It catalyses the reaction 5-methylaminomethyl-2-thiouridine(34) in tRNA + (2E)-geranyl diphosphate = 5-methylaminomethyl-S-(2E)-geranyl-thiouridine(34) in tRNA + diphosphate. It carries out the reaction 5-methylaminomethyl-S-(2E)-geranyl-thiouridine(34) in tRNA + selenophosphate + H(+) = 5-methylaminomethyl-2-(Se-phospho)selenouridine(34) in tRNA + (2E)-thiogeraniol. The catalysed reaction is 5-methylaminomethyl-2-(Se-phospho)selenouridine(34) in tRNA + H2O = 5-methylaminomethyl-2-selenouridine(34) in tRNA + phosphate. Involved in the post-transcriptional modification of the uridine at the wobble position (U34) of tRNA(Lys), tRNA(Glu) and tRNA(Gln). Catalyzes the conversion of 2-thiouridine (S2U-RNA) to 2-selenouridine (Se2U-RNA). Acts in a two-step process involving geranylation of 2-thiouridine (S2U) to S-geranyl-2-thiouridine (geS2U) and subsequent selenation of the latter derivative to 2-selenouridine (Se2U) in the tRNA chain. The polypeptide is tRNA 2-selenouridine synthase (Salmonella enteritidis).